Consider the following 385-residue polypeptide: ATP phosphoribosyltransferase regulatory subunit (385 aa).

Belongs to the class-II aminoacyl-tRNA synthetase family. HisZ subfamily. Heteromultimer composed of HisG and HisZ subunits.

Its subcellular location is the cytoplasm. The protein operates within amino-acid biosynthesis; L-histidine biosynthesis; L-histidine from 5-phospho-alpha-D-ribose 1-diphosphate: step 1/9. Required for the first step of histidine biosynthesis. May allow the feedback regulation of ATP phosphoribosyltransferase activity by histidine. This is ATP phosphoribosyltransferase regulatory subunit from Bordetella avium (strain 197N).